We begin with the raw amino-acid sequence, 574 residues long: M-phase inducer phosphatase 2 (574 aa).

Disordered regions lie at residues 31-51 (GFGFGSDGLLGSPERAASSSP) and 90-110 (RRTSECSLSSESSESSDAGLC). Residue Ser42 is modified to Phosphoserine. Residues 90–105 (RRTSECSLSSESSESS) show a composition bias toward low complexity. The residue at position 166 (Ser166) is a Phosphoserine; by MELK. At Ser246 the chain carries Phosphoserine. Ser319 is modified (phosphoserine; by MAPKAPK2 and MELK). Ser319 is modified (phosphoserine; by MELK and MAPK14). Positions 339–359 (DVPVLSKRRKSGTPLEEQQLE) are disordered. Ser349 carries the phosphoserine; by AURKA modification. Residue Ser370 is modified to Phosphoserine; by BRSK1 and MAPK14. A Rhodanese domain is found at 425–532 (IVEKFVIVDC…FFPQHPNFCE (108 aa)). Cys481 is an active-site residue. Position 557 is a phosphoserine (Ser557).

Belongs to the MPI phosphatase family. In terms of assembly, interacts with MAPK14 and 14-3-3 proteins. Post-translationally, phosphorylated by BRSK1 in vitro. Phosphorylated by CHEK1, which inhibits the activity of this protein. Phosphorylation at Ser-349 by AURKA might locally participate in the control of the onset of mitosis. Phosphorylation by MELK at Ser-166 promotes localization to the centrosome and the spindle poles during mitosis. Phosphorylation at Ser-319 and Ser-370 by MAPK14 is required for binding to 14-3-3 proteins.

It is found in the cytoplasm. It localises to the cytoskeleton. Its subcellular location is the microtubule organizing center. The protein resides in the centrosome. The protein localises to the spindle pole. It catalyses the reaction O-phospho-L-tyrosyl-[protein] + H2O = L-tyrosyl-[protein] + phosphate. Stimulated by B-type cyclins. Its function is as follows. Tyrosine protein phosphatase which functions as a dosage-dependent inducer of mitotic progression. Directly dephosphorylates CDK1 and stimulates its kinase activity. Required for G2/M phases of the cell cycle progression and abscission during cytokinesis in a ECT2-dependent manner. The three isoforms seem to have a different level of activity. In Rattus norvegicus (Rat), this protein is M-phase inducer phosphatase 2 (Cdc25b).